A 568-amino-acid polypeptide reads, in one-letter code: MSSSSIEDIKGKSHRLRGSLLESLANPTTGALRESDQTLIKYHGSYQQDDRDLREERRRQKLEPAYQFMIRTRTPGGVITPQQWLQLDAIATRYANHSLRVTTRQAFQFHGVIKRELKTTMQAINAALIDTLAACGDVNRNVQVAANPLISRAHADLYTDAAHLSEHLLPNTRAYYEIWLDEKKVAGAGEEEEPIYGPHYLPRKFKIGFAAPPINDVDVFANDLGFIAVIVDKTLLGYNVTIGGGMGTTHGDPDTWPRIGNIIGFITRADLITISTAIVTTQRDFGNRTLRKRARFKYTIDDRGLDCIVGEIQQRAGITLQPARPFVFEHNGDRYGWIEGEDGHWHLTLLLPAGRIADTEGSTLLSGFREIAQLGIGEFRMTPNQNVVIAGISPGQRAAIDALVTQYGLDTGNRAPTALARHAMACVALPTCGLAMAEAERYLPDFNAKLQPILEKYGLAETPILLRISGCPNGCSRPYLAEIALVGKAPGRYNLMLGGDQRGQRLNTLYRENITETEILAALEPLLGRYQQKRLPSEGFGDFLHRTGIIALPPYPTHRHVISSTLQA.

[4Fe-4S] cluster-binding residues include C426, C432, C471, and C475. C475 is a siroheme binding site.

The protein belongs to the nitrite and sulfite reductase 4Fe-4S domain family. In terms of assembly, alpha(8)-beta(8). The alpha component is a flavoprotein, the beta component is a hemoprotein. It depends on siroheme as a cofactor. [4Fe-4S] cluster is required as a cofactor.

The enzyme catalyses hydrogen sulfide + 3 NADP(+) + 3 H2O = sulfite + 3 NADPH + 4 H(+). Its pathway is sulfur metabolism; hydrogen sulfide biosynthesis; hydrogen sulfide from sulfite (NADPH route): step 1/1. Component of the sulfite reductase complex that catalyzes the 6-electron reduction of sulfite to sulfide. This is one of several activities required for the biosynthesis of L-cysteine from sulfate. The sequence is that of Sulfite reductase [NADPH] hemoprotein beta-component from Xylella fastidiosa (strain M12).